Here is a 448-residue protein sequence, read N- to C-terminus: UDP-N-acetylmuramoylalanine--D-glutamate ligase (448 aa).

UDP-N-acetyl-alpha-D-muramoyl-L-alanine contacts are provided by lysine 17, serine 18, threonine 38, arginine 39, and glycine 78. 116-122 contacts ATP; that stretch reads GSNAKST. ADP contacts are provided by alanine 119, lysine 120, serine 121, and threonine 122. 2 residues coordinate UDP-N-acetyl-alpha-D-muramoyl-L-alanine: asparagine 143 and histidine 188. The ADP site is built by asparagine 278, arginine 309, aspartate 324, and lysine 326.

The protein belongs to the MurCDEF family.

Its subcellular location is the cytoplasm. It carries out the reaction UDP-N-acetyl-alpha-D-muramoyl-L-alanine + D-glutamate + ATP = UDP-N-acetyl-alpha-D-muramoyl-L-alanyl-D-glutamate + ADP + phosphate + H(+). It functions in the pathway cell wall biogenesis; peptidoglycan biosynthesis. In terms of biological role, involved in cell wall formation. Catalyzes the addition of D-glutamate to the peptidoglycan precursor UDP-N-acetylmuramoyl-L-alanine (UMA). The protein is UDP-N-acetylmuramoylalanine--D-glutamate ligase of Pseudomonas aeruginosa (strain ATCC 15692 / DSM 22644 / CIP 104116 / JCM 14847 / LMG 12228 / 1C / PRS 101 / PAO1).